The sequence spans 194 residues: Imidazoleglycerol-phosphate dehydratase (194 aa).

Belongs to the imidazoleglycerol-phosphate dehydratase family.

It is found in the cytoplasm. It carries out the reaction D-erythro-1-(imidazol-4-yl)glycerol 3-phosphate = 3-(imidazol-4-yl)-2-oxopropyl phosphate + H2O. It participates in amino-acid biosynthesis; L-histidine biosynthesis; L-histidine from 5-phospho-alpha-D-ribose 1-diphosphate: step 6/9. In Thermoanaerobacter sp. (strain X514), this protein is Imidazoleglycerol-phosphate dehydratase.